We begin with the raw amino-acid sequence, 156 residues long: EPIDERMAL PATTERNING FACTOR-like protein 6 (156 aa).

The first 47 residues, 1-47 (MGFERTSSSLSLLSSSLPSSLQPSENTRAKFSLFYLLLLFFVLCVIA), serve as a signal peptide directing secretion. 3 disulfides stabilise this stretch: cysteine 113/cysteine 147, cysteine 117/cysteine 123, and cysteine 120/cysteine 149.

This sequence belongs to the plant cysteine rich small secretory peptide family. Epidermal patterning factor subfamily. As to quaternary structure, interacts with ERECTA. As to expression, expressed in the internal layers of the root, hypocotyl and stems, and in the midrib of developing rosette leaves. Detected in a ring of cells surrounding the vascular elements. Expressed in developing stems soon after bolting, in inflorescence stems, near the root apex and in the chalazal region of ovules. Not found in cotyledons or in stomatal precursors or stomata.

The protein resides in the secreted. Acts primarily as positive regulator of inflorescence growth. Endodermal expression is sufficient for proper inflorescence architecture. Redundantly involved with EPFL4 in procambial development regulation. Also acts as tissue-specific regulator of epidermal pattern. Controls stomatal patterning by repressing stomatal production. TMM (AC Q9SSD1) functions to dampen or block CHAL signaling. Not processed by SDD1 (AC O64495). Acts as growth-regulatory ligand for ERECTA family receptors. This chain is EPIDERMAL PATTERNING FACTOR-like protein 6, found in Arabidopsis thaliana (Mouse-ear cress).